The sequence spans 191 residues: Fe/S biogenesis protein NfuA (191 aa).

[4Fe-4S] cluster contacts are provided by C149 and C152.

The protein belongs to the NfuA family. Homodimer. [4Fe-4S] cluster serves as cofactor.

In terms of biological role, involved in iron-sulfur cluster biogenesis. Binds a 4Fe-4S cluster, can transfer this cluster to apoproteins, and thereby intervenes in the maturation of Fe/S proteins. Could also act as a scaffold/chaperone for damaged Fe/S proteins. This Salmonella paratyphi A (strain ATCC 9150 / SARB42) protein is Fe/S biogenesis protein NfuA.